Consider the following 305-residue polypeptide: UDP-3-O-acyl-N-acetylglucosamine deacetylase (305 aa).

Zn(2+) is bound by residues His-79, His-238, and Asp-242. The active-site Proton donor is the His-265.

It belongs to the LpxC family. It depends on Zn(2+) as a cofactor.

The catalysed reaction is a UDP-3-O-[(3R)-3-hydroxyacyl]-N-acetyl-alpha-D-glucosamine + H2O = a UDP-3-O-[(3R)-3-hydroxyacyl]-alpha-D-glucosamine + acetate. The protein operates within glycolipid biosynthesis; lipid IV(A) biosynthesis; lipid IV(A) from (3R)-3-hydroxytetradecanoyl-[acyl-carrier-protein] and UDP-N-acetyl-alpha-D-glucosamine: step 2/6. Catalyzes the hydrolysis of UDP-3-O-myristoyl-N-acetylglucosamine to form UDP-3-O-myristoylglucosamine and acetate, the committed step in lipid A biosynthesis. This chain is UDP-3-O-acyl-N-acetylglucosamine deacetylase, found in Enterobacter sp. (strain 638).